The primary structure comprises 60 residues: Large ribosomal subunit protein uL30 (60 aa).

Belongs to the universal ribosomal protein uL30 family. In terms of assembly, part of the 50S ribosomal subunit.

The protein is Large ribosomal subunit protein uL30 of Oceanobacillus iheyensis (strain DSM 14371 / CIP 107618 / JCM 11309 / KCTC 3954 / HTE831).